The following is an 846-amino-acid chain: MYVFVDRLSDSVSIPFVSKRAYRKRVNLDDDEDDFVDDPSPTEQKTKAEKKMERMGYKAGEGLGKNKQGIQEPIAISFREGKAGLGHEQWDDSTENKTVEETVIWMTNIDEGIRREICDKLIKDDQWMVVRKEKKVIDDETKFCSEKKLKDMLEAKNVFDSMSEKDIREARTRANPYETIGSAFFLNRSAMKTANMDKIYDWILSRENTGNNSFLLKNPLQEGTTAENVDRHEDLFYFADVCAGPGGFSEYMLWRKAFYNAKGFGFTLAGKDDFKLQKFTASSAYFFETFYGTKKNGDVMDPENIDSLEKLISEGTDGQGVHLMMADGAFSVQGQENIQEILSKRLYLCQLLVSLCIVREGGNFLCNLFDIFTPFSVGLIYLMRVCYDSISLHKPHTSRPANSERFVVCKGLRIECARVVKEYLKRVNRKLDELKNKNSKDDVMELMPLDVIKSDEQFMKEIIEHNEVLAHRQTVYLQKYKSFAKNQGQFDKDQGNLRDECLKYWQVPNKQRPRGGDRGSHLRRGRMGNKFPEFSISMLQSKIPLNIPYEEYRFVALGAASDPQLLIGTGDAVFIYRHGHFEQIDRDYARIPENTILLVDCAEEVKTDGSKIRISSDPHMIRIVDAAVLYGDNVSQLPYEARMKAAQKFALALKLTKKTIQIGWGFRAKDITPHQVCCAQTYSLKELDEFQSNLIELKQRGEVIVLFKEGDRQFKTQSLRLTRIIKQDWQMGWSKSQQVPYVHSPLHQKEGSILEDQWKKREIHSSFWDSVILTNKDKQKMTEMMQHGHNAVPSTIWSWKPCMRTEYGPYKIMNHPEAFDGKPTISAIKSQIAETDLSTQPSNYFY.

The disordered stretch occupies residues 30 to 50 (DDEDDFVDDPSPTEQKTKAEK). Positions 44-90 (QKTKAEKKMERMGYKAGEGLGKNKQGIQEPIAISFREGKAGLGHEQW) constitute a G-patch domain. The 230-residue stretch at 184 to 413 (FFLNRSAMKT…ERFVVCKGLR (230 aa)) folds into the RrmJ-type SAM-dependent 2'-O-MTase domain.

This chain is Inactive cap-specific mRNA (nucleoside-2'-O-)-methyltransferase 1B, found in Caenorhabditis briggsae.